The chain runs to 88 residues: Small ribosomal subunit protein uS15c (88 aa).

The protein belongs to the universal ribosomal protein uS15 family. As to quaternary structure, part of the 30S ribosomal subunit.

It localises to the plastid. It is found in the chloroplast. The sequence is that of Small ribosomal subunit protein uS15c (rps15) from Crucihimalaya wallichii (Rock-cress).